The following is a 147-amino-acid chain: uncharacterized protein (147 aa).

One can recognise an HTH marR-type domain in the interval 1-137 (MRDNTIGSLI…LYELMTKVHK (137 aa)). Positions 53–76 (QMELAEKVTVTQGGISRMLTRLEK) form a DNA-binding region, H-T-H motif.

This is an uncharacterized protein from Bacillus anthracis.